The sequence spans 103 residues: Large ribosomal subunit protein bL21 (103 aa).

Belongs to the bacterial ribosomal protein bL21 family. In terms of assembly, part of the 50S ribosomal subunit. Contacts protein L20.

In terms of biological role, this protein binds to 23S rRNA in the presence of protein L20. This is Large ribosomal subunit protein bL21 from Aromatoleum aromaticum (strain DSM 19018 / LMG 30748 / EbN1) (Azoarcus sp. (strain EbN1)).